A 530-amino-acid polypeptide reads, in one-letter code: Rho GTPase-activating protein 36 (530 aa).

The N-terminal stretch at 1 to 19 is a signal peptide; it reads MPPLLLLSALIFLVNVLGG. Residues 209–409 enclose the Rho-GAP domain; that stretch reads MSLNPIAKQI…AMIDNWDVLF (201 aa). The tract at residues 471–512 is disordered; the sequence is GQSKPFDEGSSEEPAVPPGTARSHDDEEGAGNPLILEQDRPL.

In terms of assembly, may interacts (via the Rho-GAP domain) with the active form of RAC1.

In terms of biological role, GTPase activator for the Rho-type GTPases by converting them to an inactive GDP-bound state. The sequence is that of Rho GTPase-activating protein 36 (ARHGAP36) from Bos taurus (Bovine).